Consider the following 205-residue polypeptide: Ribosomal RNA large subunit methyltransferase E (205 aa).

The S-adenosyl-L-methionine site is built by glycine 60, tryptophan 62, aspartate 80, aspartate 96, and aspartate 121. Catalysis depends on lysine 161, which acts as the Proton acceptor.

Belongs to the class I-like SAM-binding methyltransferase superfamily. RNA methyltransferase RlmE family.

The protein resides in the cytoplasm. The catalysed reaction is uridine(2552) in 23S rRNA + S-adenosyl-L-methionine = 2'-O-methyluridine(2552) in 23S rRNA + S-adenosyl-L-homocysteine + H(+). In terms of biological role, specifically methylates the uridine in position 2552 of 23S rRNA at the 2'-O position of the ribose in the fully assembled 50S ribosomal subunit. This is Ribosomal RNA large subunit methyltransferase E from Chromobacterium violaceum (strain ATCC 12472 / DSM 30191 / JCM 1249 / CCUG 213 / NBRC 12614 / NCIMB 9131 / NCTC 9757 / MK).